Reading from the N-terminus, the 115-residue chain is Promotilin (115 aa).

Positions 1 to 25 are cleaved as a signal peptide; it reads MLSRKATAILLVVHAAAMLASQTEG. The disordered stretch occupies residues 43 to 73; it reads RYKGQKKSLSVQQRSEEVGPVDPAEPREEKQ.

Belongs to the motilin family.

Its subcellular location is the secreted. Plays an important role in the regulation of interdigestive gastrointestinal motility and indirectly causes rhythmic contraction of duodenal and colonic smooth muscle. The polypeptide is Promotilin (MLN) (Ovis aries (Sheep)).